The sequence spans 116 residues: Large ribosomal subunit protein uL18 (116 aa).

It belongs to the universal ribosomal protein uL18 family. In terms of assembly, part of the 50S ribosomal subunit; part of the 5S rRNA/L5/L18/L25 subcomplex. Contacts the 5S and 23S rRNAs.

In terms of biological role, this is one of the proteins that bind and probably mediate the attachment of the 5S RNA into the large ribosomal subunit, where it forms part of the central protuberance. This chain is Large ribosomal subunit protein uL18, found in Novosphingobium aromaticivorans (strain ATCC 700278 / DSM 12444 / CCUG 56034 / CIP 105152 / NBRC 16084 / F199).